The following is a 96-amino-acid chain: HIG1 domain family member 1C (96 aa).

The Cytoplasmic segment spans residues 1–26 (MSSDEWSAAEDEGQLSRLLRKSRDSP). In terms of domain architecture, HIG1 spans 1-91 (MSSDEWSAAE…YKDYIRPRFF (91 aa)). A helical membrane pass occupies residues 27–44 (FVPVGMAGFVAVLSYGLY). The Extracellular segment spans residues 45–58 (KLNSRREQKMSLHL). The helical transmembrane segment at 59–81 (IHVRVAAQGCVVGAVTLGVLYSM) threads the bilayer. Residues 82–96 (YKDYIRPRFFNVPKK) are Cytoplasmic-facing.

Its subcellular location is the membrane. The chain is HIG1 domain family member 1C (Higd1c) from Mus musculus (Mouse).